The following is a 631-amino-acid chain: ATP-dependent zinc metalloprotease FtsH (631 aa).

Topologically, residues 1–2 (MK) are stromal. The chain crosses the membrane as a helical span at residues 3–23 (ISWKNILLTLIPLGLISFLVW). Residues 24 to 118 (QGFNNTTNPQ…AHATNDSTPA (95 aa)) are Lumenal-facing. A helical transmembrane segment spans residues 119–139 (WSLIGNLIFPILLIAGLAFLF). The Stromal portion of the chain corresponds to 140 to 631 (RRSSNLPGGP…IDYKSQLKST (492 aa)). 213-220 (GPPGTGKT) is a binding site for ATP. His434 is a binding site for Zn(2+). Glu435 is an active-site residue. 2 residues coordinate Zn(2+): His438 and Asp512.

This sequence in the central section; belongs to the AAA ATPase family. The protein in the C-terminal section; belongs to the peptidase M41 family. As to quaternary structure, homohexamer. It depends on Zn(2+) as a cofactor.

It localises to the plastid. The protein localises to the chloroplast thylakoid membrane. Acts as a processive, ATP-dependent zinc metallopeptidase. This chain is ATP-dependent zinc metalloprotease FtsH, found in Guillardia theta (Cryptophyte).